Here is a 178-residue protein sequence, read N- to C-terminus: Large ribosomal subunit protein uL6 (178 aa).

The protein belongs to the universal ribosomal protein uL6 family. In terms of assembly, part of the 50S ribosomal subunit.

This protein binds to the 23S rRNA, and is important in its secondary structure. It is located near the subunit interface in the base of the L7/L12 stalk, and near the tRNA binding site of the peptidyltransferase center. The polypeptide is Large ribosomal subunit protein uL6 (Bacillus licheniformis (strain ATCC 14580 / DSM 13 / JCM 2505 / CCUG 7422 / NBRC 12200 / NCIMB 9375 / NCTC 10341 / NRRL NRS-1264 / Gibson 46)).